A 714-amino-acid chain; its full sequence is Ribonucleoside-diphosphate reductase 2 subunit alpha (714 aa).

Residues threonine 161, 177–178, glycine 206, 386–390, and 588–592 contribute to the substrate site; these read SC, NLCSE, and PTGSI. An intrachain disulfide couples cysteine 178 to cysteine 415. Asparagine 386 (proton acceptor) is an active-site residue. The active-site Cysteine radical intermediate is cysteine 388. The active-site Proton acceptor is the glutamate 390.

Belongs to the ribonucleoside diphosphate reductase large chain family. As to quaternary structure, tetramer of two alpha and two beta subunits.

The catalysed reaction is a 2'-deoxyribonucleoside 5'-diphosphate + [thioredoxin]-disulfide + H2O = a ribonucleoside 5'-diphosphate + [thioredoxin]-dithiol. With respect to regulation, under complex allosteric control mediated by deoxynucleoside triphosphates and ATP binding. The type of nucleotide bound at the specificity site determines substrate preference. It seems probable that ATP makes the enzyme reduce CDP and UDP, dGTP favors ADP reduction and dTTP favors GDP reduction. Lacks the N-terminal activity site. Provides the precursors necessary for DNA synthesis. Catalyzes the biosynthesis of deoxyribonucleotides from the corresponding ribonucleotides. R1E contains the binding sites for both substrates and allosteric effectors and carries out the actual reduction of the ribonucleotide. This is Ribonucleoside-diphosphate reductase 2 subunit alpha (nrdE) from Salmonella typhimurium (strain LT2 / SGSC1412 / ATCC 700720).